Reading from the N-terminus, the 244-residue chain is 2,5-diamino-6-ribosylamino-4(3H)-pyrimidinone 5'-phosphate reductase (244 aa).

Residues Thr79, Asp83, Val159, and 182 to 186 (GANVI) each bind NADP(+).

It belongs to the HTP reductase family. As to quaternary structure, homodimer.

The catalysed reaction is 2,5-diamino-6-(1-D-ribitylamino)pyrimidin-4(3H)-one 5'-phosphate + NADP(+) = 2,5-diamino-6-(1-D-ribosylamino)pyrimidin-4(3H)-one 5'-phosphate + NADPH + H(+). It carries out the reaction 2,5-diamino-6-(1-D-ribitylamino)pyrimidin-4(3H)-one 5'-phosphate + NAD(+) = 2,5-diamino-6-(1-D-ribosylamino)pyrimidin-4(3H)-one 5'-phosphate + NADH + H(+). The protein operates within cofactor biosynthesis; riboflavin biosynthesis. In terms of biological role, catalyzes an early step in riboflavin biosynthesis, the NADPH-dependent reduction of the ribose side chain of 2,5-diamino-6-ribosylamino-4(3H)-pyrimidinone 5'-phosphate, yielding 2,5-diamino-6-ribitylamino-4(3H)-pyrimidinone 5'-phosphate. This is 2,5-diamino-6-ribosylamino-4(3H)-pyrimidinone 5'-phosphate reductase (RIB7) from Saccharomyces cerevisiae (strain ATCC 204508 / S288c) (Baker's yeast).